Reading from the N-terminus, the 293-residue chain is Elongation factor Ts (293 aa).

The involved in Mg(2+) ion dislocation from EF-Tu stretch occupies residues 80–83; that stretch reads TDFV.

Belongs to the EF-Ts family.

It is found in the cytoplasm. Functionally, associates with the EF-Tu.GDP complex and induces the exchange of GDP to GTP. It remains bound to the aminoacyl-tRNA.EF-Tu.GTP complex up to the GTP hydrolysis stage on the ribosome. The chain is Elongation factor Ts from Burkholderia cenocepacia (strain HI2424).